The sequence spans 251 residues: MNILFSKRLGILTIGSLLVLAGCQTSGSSAGESNQTTSSSAVEEDSSKTQEQTSDSHTHEHSHDHSHAHDEETEKIYEGYFKNSQVKDRLLSDWEGDWQSVYPYLQDGTLDEVFSYKSEHEGGKTAEEYKEYYKKGYQTDVDRIVIQKDTVTFFKNGKEYSGKYTYDGYEILTYDAGNRGVRYIFKLAKKAEGLPQYIQFSDHSIYPTKASHYHLYWGDDREALLDEVKNWPTYYPSKMDGHDIAHEMMAH.

Positions 1–30 (MNILFSKRLGILTIGSLLVLAGCQTSGSSA) are cleaved as a signal peptide. Positions 25-41 (TSGSSAGESNQTTSSSA) are enriched in polar residues. A disordered region spans residues 25 to 72 (TSGSSAGESNQTTSSSAVEEDSSKTQEQTSDSHTHEHSHDHSHAHDEE). Basic and acidic residues predominate over residues 54 to 72 (SDSHTHEHSHDHSHAHDEE). Residues histidine 203, histidine 212, histidine 214, glutamate 247, and histidine 251 each contribute to the Zn(2+) site.

The protein belongs to the calycin superfamily. ZinT family.

The polypeptide is Probable metal-binding protein YrpE (yrpE) (Bacillus subtilis (strain 168)).